We begin with the raw amino-acid sequence, 201 residues long: Adenylyl-sulfate kinase (201 aa).

An ATP-binding site is contributed by G35–S42. S109 acts as the Phosphoserine intermediate in catalysis.

This sequence belongs to the APS kinase family.

It catalyses the reaction adenosine 5'-phosphosulfate + ATP = 3'-phosphoadenylyl sulfate + ADP + H(+). The protein operates within sulfur metabolism; hydrogen sulfide biosynthesis; sulfite from sulfate: step 2/3. Catalyzes the synthesis of activated sulfate. In Salmonella arizonae (strain ATCC BAA-731 / CDC346-86 / RSK2980), this protein is Adenylyl-sulfate kinase.